The following is a 62-amino-acid chain: MARVCAITGRKARSGNSRSHAMNATKRKWGANLQKVRVRIDGKVQRVYVSARALKSGKIERV.

The segment at M1–K28 is disordered.

The protein belongs to the bacterial ribosomal protein bL28 family.

The chain is Large ribosomal subunit protein bL28 from Bacillus thuringiensis (strain Al Hakam).